The following is a 330-amino-acid chain: Lysophospholipase D GDPD3 (330 aa).

A topological domain (cytoplasmic) is located at residue methionine 1. Residues 2-22 (IPLLYFVLPTLGSYVMLSIFF) form a helical membrane-spanning segment. The Extracellular segment spans residues 23–200 (LRRPHLLHTP…ANPEMPMAFT (178 aa)). A GP-PDE domain is found at 39-308 (IRLAAHRGGS…DYPTALRHYL (270 aa)). Residues glutamate 71, aspartate 73, and histidine 86 each coordinate a divalent metal cation. Residues 201-221 (IWRSFWILLLYYLGLLPFVSI) traverse the membrane as a helical segment. The Cytoplasmic portion of the chain corresponds to 222–330 (PEKFFFCFLP…EALSCLSLKK (109 aa)). Positions 311–330 (QEEETQPPQPEALSCLSLKK) are disordered.

This sequence belongs to the glycerophosphoryl diester phosphodiesterase family. In terms of tissue distribution, highly expressed in stomach and kidney. In stomach detected in the glandular epithelium. Predominantly expressed in the stomach (at protein level).

Its subcellular location is the membrane. The protein resides in the cytoplasm. The protein localises to the perinuclear region. It is found in the endoplasmic reticulum membrane. The catalysed reaction is 1-hexadecanoyl-sn-glycero-3-phosphocholine + H2O = 1-hexadecanoyl-sn-glycero-3-phosphate + choline + H(+). It carries out the reaction 1-O-hexadecyl-sn-glycero-3-phosphocholine + H2O = 1-O-hexadecyl-sn-glycero-3-phosphate + choline + H(+). It catalyses the reaction 1-O-(1Z-octadecenyl)-sn-glycero-3-phospho-N-hexadecanoyl-ethanolamine + H2O = 1-O-(1Z-octadecenyl)-sn-glycero-3-phosphate + N-hexadecanoylethanolamine + H(+). The enzyme catalyses N-(5Z,8Z,11Z,14Z-eicosatetraenoyl)-1-(9Z-octadecenoyl)-sn-glycero-3-phosphoethanolamine + H2O = N-(5Z,8Z,11Z,14Z-eicosatetraenoyl)-ethanolamine + 1-(9Z-octadecenoyl)-sn-glycero-3-phosphate + H(+). The catalysed reaction is N,1-di-(9Z-octadecenoyl)-sn-glycero-3-phosphoethanolamine + H2O = N-(9Z-octadecenoyl) ethanolamine + 1-(9Z-octadecenoyl)-sn-glycero-3-phosphate + H(+). It carries out the reaction N-hexadecanoyl-1-(9Z-octadecenoyl)-sn-glycero-3-phosphoethanolamine + H2O = N-hexadecanoylethanolamine + 1-(9Z-octadecenoyl)-sn-glycero-3-phosphate + H(+). It catalyses the reaction 1-hexadecanoyl-sn-glycero-3-phosphocholine + H2O = sn-glycerol 3-phosphocholine + hexadecanoate + H(+). Lysophospholipase D activity is stimulated by calcium. Loss of lysophospholipase D activity in presence of EDTA. Functionally, hydrolyzes lysoglycerophospholipids to produce lysophosphatidic acid (LPA) and the corresponding amines. Shows a preference for 1-O-alkyl-sn-glycero-3-phosphocholine (lyso-PAF), lysophosphatidylcholine (lyso-PC) and N-acylethanolamine lysophospholipids. Does not display glycerophosphodiester phosphodiesterase activity, since it cannot hydrolyze either glycerophosphoinositol or glycerophosphocholine. The sequence is that of Lysophospholipase D GDPD3 from Mus musculus (Mouse).